Reading from the N-terminus, the 324-residue chain is Zinc transporter ZIP1 (324 aa).

The Extracellular portion of the chain corresponds to 1–30 (MGPWGEPELLVWRPEAAASEAPVPMGLEVK). Residues 31 to 51 (LGALVLLLVLTLICSLVPVCV) traverse the membrane as a helical segment. The Cytoplasmic segment spans residues 52–68 (LRRPGANPEASASRQKA). A helical transmembrane segment spans residues 69-89 (LSLVSCFAGGVFLATCLLDLL). The Extracellular segment spans residues 90–104 (PDYLGAIDEALAALH). The helical transmembrane segment at 105–125 (VTLQFPLQEFILAMGFFLVLV) threads the bilayer. Residues 126-179 (MEQITLAYKEQSGPPPREETRALLGTVNGGPQHWHDGLGVPQAGGASSAPSALR) are Cytoplasmic-facing. Residues 180–200 (ACVLVFSLALHSVFEGLAVGL) form a helical membrane-spanning segment. The Extracellular segment spans residues 201–206 (QRDQAR). The helical transmembrane segment at 207-227 (AMELCLALLLHKGILAVSLSL) threads the bilayer. Over 228 to 237 (RLLQSHLRAQ) the chain is Cytoplasmic. The chain crosses the membrane as a helical span at residues 238 to 258 (VVAGCGILFSCMTPLGIGLGT). The Extracellular segment spans residues 259-272 (ALAESAGPLHQLAQ). Residues 273–293 (SVLEGMAAGTFLYITFLEILP) traverse the membrane as a helical segment. Topologically, residues 294 to 303 (QELATSEQRI) are cytoplasmic. The helical transmembrane segment at 304–324 (LKVILLLAGFALLTGLLFIQI) threads the bilayer.

Belongs to the ZIP transporter (TC 2.A.5) family.

The protein resides in the cell membrane. The protein localises to the endoplasmic reticulum membrane. The catalysed reaction is Zn(2+)(in) = Zn(2+)(out). In terms of biological role, transporter for the divalent cation Zn(2+). Mediates the influx of Zn(2+) into cells from extracellular space. The protein is Zinc transporter ZIP1 (SLC39A1) of Bos taurus (Bovine).